Reading from the N-terminus, the 607-residue chain is Phosphatidylinositol 4-kinase LSB6 (607 aa).

The segment covering 73-88 (NVPSESPRPDQTSGSN) has biased composition (polar residues). The tract at residues 73–93 (NVPSESPRPDQTSGSNPAVGL) is disordered. A PI3K/PI4K catalytic domain is found at 161–522 (GRELERIQTG…LVRRTRCQVI (362 aa)). Residues 167-173 (IQTGSSG) are G-loop. Positions 318–356 (KSSGEDINHKPETTRNLTDETEPSKQINSSPISTESEEN) are disordered. Over residues 319-330 (SSGEDINHKPET) the composition is skewed to basic and acidic residues. Over residues 341 to 351 (SKQINSSPIST) the composition is skewed to polar residues. A catalytic loop region spans residues 384 to 392 (RNTDRGLDN). Residues 411-431 (AIDNGLSFPWKHPDEWRLYPY) form an activation loop region.

Belongs to the PI3/PI4-kinase family. In terms of assembly, interacts with LAS17. Mg(2+) is required as a cofactor. It depends on Mn(2+) as a cofactor.

It is found in the cell membrane. The protein localises to the vacuole membrane. The catalysed reaction is a 1,2-diacyl-sn-glycero-3-phospho-(1D-myo-inositol) + ATP = a 1,2-diacyl-sn-glycero-3-phospho-(1D-myo-inositol 4-phosphate) + ADP + H(+). May play a role in endocytic and/or exocytic pathways. The chain is Phosphatidylinositol 4-kinase LSB6 (LSB6) from Saccharomyces cerevisiae (strain ATCC 204508 / S288c) (Baker's yeast).